The chain runs to 310 residues: uncharacterized protein (310 aa).

This is an uncharacterized protein from Acanthamoeba polyphaga (Amoeba).